A 214-amino-acid chain; its full sequence is MSNQKNNIPRATLKRLPLYYRLVNQLHEKGIDRVNSKTISEALDIDSASIRRDFSYFGELGKKGYGYNVESLLEFFKSKISESDTIKIGLVGVGNLGKALLSYNFSIHDEMVITEAFDIRDDIVGTKVGKVIVNKMEDLQSILKSAELDVVILTTPGSAAQEAADQIVDSGVKGILNFTPTRINVPDDVSVHQIDLGIELQSLLFFMNNLRNSN.

Positions Leu-18–Phe-57 form a DNA-binding region, H-T-H motif. Gly-92 to Gly-97 contributes to the NAD(+) binding site.

This sequence belongs to the transcriptional regulatory Rex family. In terms of assembly, homodimer.

Its subcellular location is the cytoplasm. In terms of biological role, modulates transcription in response to changes in cellular NADH/NAD(+) redox state. This is Redox-sensing transcriptional repressor Rex from Staphylococcus carnosus (strain TM300).